The chain runs to 411 residues: MGLIVQKFGGTSVGSVERILNVANRVIEEKKNGNDVVVVVSAMGKTTDELVDLAKQISAHPPKREMDMLLTTGEQVTISLLAMALNEKGYEAISYTGWQAGITTEPVFGNARILNIETEKIQKQLNEGKIVVVAGFQGIDEHGEITTLGRGGSDTTAVALAAALKAEKCDIYTDVTGVFTTDPRYVKSARKLASISYDEMLELANLGAGVLHPRAVEFAKNYGITLEVRSSMEREEGTIIEEEVTMEQNLVVRGVAFEDEITRVTVFGLPNSLTSLSTIFTTLAQNRINVDIIIQSATDAETTNLSFSIKSDDLEETMAVLENNKNLLNYQGIESETGLAKVSIVGSGMISNPGVAAKMFEVLALNGIQVKMVSTSEIKVSTVVEESQMIKAVEALHQAFELSGSAVKSER.

7-10 (KFGG) is an ATP binding site. 25–30 (RVIEEK) contributes to the substrate binding site. Position 41 (Ser41) interacts with ATP. Substrate is bound by residues 47-49 (TDE), Glu74, 125-126 (LN), 150-153 (RGGS), and Ser153. Residues 173–174 (TD) and 179–184 (FTTDPR) each bind ATP. 2 consecutive ACT domains span residues 264–338 (VTVF…SETG) and 344–411 (IVGS…KSER). Substrate is bound by residues 289–291 (NVD), Gln295, 355–356 (VA), 369–370 (QV), and 376–377 (SE).

Belongs to the aspartokinase family. Tetramer consisting of 2 isoforms Alpha (catalytic and regulation) and of a homodimer of 2 isoforms Beta (regulation).

It catalyses the reaction L-aspartate + ATP = 4-phospho-L-aspartate + ADP. Its pathway is amino-acid biosynthesis; L-lysine biosynthesis via DAP pathway; (S)-tetrahydrodipicolinate from L-aspartate: step 1/4. The protein operates within amino-acid biosynthesis; L-methionine biosynthesis via de novo pathway; L-homoserine from L-aspartate: step 1/3. It participates in amino-acid biosynthesis; L-threonine biosynthesis; L-threonine from L-aspartate: step 1/5. Lysine-sensitive. Functionally, catalyzes the phosphorylation of the beta-carboxyl group of aspartic acid with ATP to yield 4-phospho-L-aspartate, which is involved in the branched biosynthetic pathway leading to the biosynthesis of amino acids threonine, isoleucine and methionine. In Bacillus sp. (strain MGA3), this protein is Aspartokinase (lysC).